Here is a 283-residue protein sequence, read N- to C-terminus: Pantothenate synthetase (283 aa).

30–37 is a binding site for ATP; the sequence is MGNLHDGH. The Proton donor role is filled by His-37. Gln-61 provides a ligand contact to (R)-pantoate. A beta-alanine-binding site is contributed by Gln-61. An ATP-binding site is contributed by 149 to 152; that stretch reads GEKD. Gln-155 serves as a coordination point for (R)-pantoate. An ATP-binding site is contributed by 186–189; it reads LSSR.

This sequence belongs to the pantothenate synthetase family. In terms of assembly, homodimer.

The protein resides in the cytoplasm. The catalysed reaction is (R)-pantoate + beta-alanine + ATP = (R)-pantothenate + AMP + diphosphate + H(+). It participates in cofactor biosynthesis; (R)-pantothenate biosynthesis; (R)-pantothenate from (R)-pantoate and beta-alanine: step 1/1. Its function is as follows. Catalyzes the condensation of pantoate with beta-alanine in an ATP-dependent reaction via a pantoyl-adenylate intermediate. This Shigella dysenteriae serotype 1 (strain Sd197) protein is Pantothenate synthetase.